A 220-amino-acid polypeptide reads, in one-letter code: DNA mismatch repair protein MutH (220 aa).

The protein belongs to the MutH family.

It is found in the cytoplasm. Sequence-specific endonuclease that cleaves unmethylated GATC sequences. It is involved in DNA mismatch repair. The protein is DNA mismatch repair protein MutH of Buchnera aphidicola subsp. Baizongia pistaciae (strain Bp).